Consider the following 53-residue polypeptide: uncharacterized protein (53 aa).

Residues 14-33 (SPSSLNNNNNINSKSLQINS) are compositionally biased toward low complexity. Residues 14–53 (SPSSLNNNNNINSKSLQINSENKSKIQNNNPLGNKGGVQF) are disordered.

This is an uncharacterized protein from Dictyostelium discoideum (Social amoeba).